A 382-amino-acid chain; its full sequence is Homeobox protein bagpipe (382 aa).

Disordered stretches follow at residues 27 to 66 (NDIL…SKSP), 144 to 178 (TSND…KKRS), and 314 to 382 (QPIP…VEID). The segment covering 48–62 (EPEKLKPSSDRERSI) has biased composition (basic and acidic residues). Positions 158–170 (SSPSESPLSHDGS) are enriched in low complexity. The homeobox DNA-binding region spans 175 to 234 (KKRSRAAFSHAQVFELERRFAQQRYLSGPERSEMAKSLRLTETQVKIWFQNRRYKTKRKQ). Residues 321–335 (QSSSFVTASSASSSP) are compositionally biased toward low complexity. Positions 373-382 (EDVDENVEID) are enriched in acidic residues.

Belongs to the NK-3 homeobox family. In terms of tissue distribution, is expressed in a segmented pattern in visceral muscle and in a subset of cardiac muscles. Loss of activity results in segmental gaps in midgut visceral muscle.

The protein localises to the nucleus. Functionally, involved in the determination of cell fates in the dorsal mesoderm. This is Homeobox protein bagpipe (bap) from Drosophila melanogaster (Fruit fly).